A 420-amino-acid chain; its full sequence is Nucleoporin NUP42 (420 aa).

The segment at 1–25 adopts a C3H1-type zinc-finger fold; that stretch reads MTICQFFLQGRCRFGDRCWNEHPGA. The stretch at 14-15 is one FG 1 repeat; sequence FG. Residues 25–111 are disordered; sequence ARGAGGARQP…FASPLSDEQK (87 aa). Polar residues predominate over residues 42-67; the sequence is SGNNRRGWNASSQRYSNVIQPSSFPK. 10 FG repeats span residues 82–83, 95–96, 218–219, 220–221, 228–229, 265–266, 271–272, 288–289, 345–346, and 364–365; these read FG. A compositionally biased stretch (polar residues) spans 87-102; sequence SGASTSRGFGSSQNPF. A disordered region spans residues 323–345; sequence MAASPSGSTTAPPLRSGSSVVGF. Residues 365 to 420 form an interaction with GLE1 region; it reads GGSGISTSVLASGAADNALFTPRDQLMKEELEQFQSQRFTLGKIPLKPPPVELLTV.

As to quaternary structure, probable component of the nuclear pore complex (NPC). Interacts with nuclear export protein NXF1. Interacts with GLE1. Able to form a heterotrimer with NUP155 and GLE1 in vitro. Interacts with XPO1. Post-translationally, O-glycosylated.

The protein localises to the nucleus. It localises to the nuclear pore complex. The protein resides in the nucleus membrane. Functionally, required for the export of mRNAs containing poly(A) tails from the nucleus into the cytoplasm. The sequence is that of Nucleoporin NUP42 (Nup42) from Mus musculus (Mouse).